A 352-amino-acid chain; its full sequence is DNA ADP-ribosyl glycohydrolase (352 aa).

Residues M1–A155 enclose the Macro domain. ADP-D-ribose is bound by residues D8–L9, T20–N22, I31–Q34, and T79. The Nucleophile role is filled by K80. G117–G121 lines the ADP-D-ribose pocket. The interaction with DarT stretch occupies residues M164–A352.

This sequence belongs to the DarG ADP-ribosyl glycohydrolase family. Interacts (via C-terminus) with cognate toxin DarT; this heterodimeric complex neutralizes the toxic effect of DarT by preventing ssDNA binding to DarT and consequently inactivating the toxin by direct protein-protein interactions.

It catalyses the reaction an N-(ADP-alpha-D-ribosyl)-thymidine in DNA + H2O = a thymidine in DNA + ADP-D-ribose. Functionally, antitoxin component of the hybrid type II/IV toxin-antitoxin (TA) system DarTG, which plays a crucial role in controlling bacterial growth and bacteriophage infection. De-ADP-ribosylates DNA (probably) modified on thymidine by its cognate toxin DarT, which neutralizes the activity of cognate toxin DarT. This chain is DNA ADP-ribosyl glycohydrolase, found in Mycobacterium bovis (strain BCG / Pasteur 1173P2).